Consider the following 592-residue polypeptide: Glutamine--fructose-6-phosphate aminotransferase [isomerizing] (592 aa).

The active-site Nucleophile; for GATase activity is Cys-2. The Glutamine amidotransferase type-2 domain occupies 2 to 217 (CGIVGYVGRD…DGEIADLTPD (216 aa)). SIS domains lie at 277 to 416 (IPFK…EREN) and 441 to 582 (VAEK…VDQP). Lys-587 functions as the For Fru-6P isomerization activity in the catalytic mechanism.

In terms of assembly, homodimer.

The protein localises to the cytoplasm. It catalyses the reaction D-fructose 6-phosphate + L-glutamine = D-glucosamine 6-phosphate + L-glutamate. Functionally, catalyzes the first step in hexosamine metabolism, converting fructose-6P into glucosamine-6P using glutamine as a nitrogen source. This chain is Glutamine--fructose-6-phosphate aminotransferase [isomerizing], found in Aquifex aeolicus (strain VF5).